An 81-amino-acid polypeptide reads, in one-letter code: Photosystem I iron-sulfur center (81 aa).

4Fe-4S ferredoxin-type domains are found at residues 1–31 and 39–68; these read MSHK…MVPW and IASS…IRVY. [4Fe-4S] cluster-binding residues include Cys-11, Cys-14, Cys-17, Cys-21, Cys-48, Cys-51, Cys-54, and Cys-58.

The cyanobacterial PSI reaction center is composed of one copy each of PsaA,B,C,D,E,F,I,J,K,L,M and X, and forms trimeric complexes. The cofactor is [4Fe-4S] cluster.

It is found in the cellular thylakoid membrane. It catalyses the reaction reduced [plastocyanin] + hnu + oxidized [2Fe-2S]-[ferredoxin] = oxidized [plastocyanin] + reduced [2Fe-2S]-[ferredoxin]. Apoprotein for the two 4Fe-4S centers FA and FB of photosystem I (PSI); essential for photochemical activity. FB is the terminal electron acceptor of PSI, donating electrons to ferredoxin. The C-terminus interacts with PsaA/B/D and helps assemble the protein into the PSI complex. Required for binding of PsaD and PsaE to PSI. PSI is a plastocyanin/cytochrome c6-ferredoxin oxidoreductase, converting photonic excitation into a charge separation, which transfers an electron from the donor P700 chlorophyll pair to the spectroscopically characterized acceptors A0, A1, FX, FA and FB in turn. This is Photosystem I iron-sulfur center from Crocosphaera subtropica (strain ATCC 51142 / BH68) (Cyanothece sp. (strain ATCC 51142)).